We begin with the raw amino-acid sequence, 387 residues long: MVLATNSRCLAYHGPLLYEAKILMSYDPSKRGSKAKVEDGLPPTVEIGNVVNTHKRKRGPRASLPAAGATPDGDDSNDKNRHFSPKEGKPDVPADLADENEDKICYYVHYKGWKNTWDEWVGEERVLALNEDNIKLQKELKAAALAAAKKGKDFDALAPPEALSETASPAPTTKRKSMASKDSPAEGPRPVKRRGGLAALEDLEKEDDYLKRKEIALVVPDKLKAQLVDDWEFVTKDHQLVGLPRKVTVVDILKEFKKEAEAKYRPGSADADILNEVVSGIKLYFDRSLGSILLYRFEREQYLQITQSPDHSNKTMSEVYGAEHLLRLFVSLPGLIAMTNMDAQSVAVLKEHLEDFVRFLSTHQKTYFLKEAYTNASPAYEALSKGL.

The disordered stretch occupies residues 52-96 (NTHKRKRGPRASLPAAGATPDGDDSNDKNRHFSPKEGKPDVPADL). Basic and acidic residues predominate over residues 76–92 (SNDKNRHFSPKEGKPDV). A Tudor-knot domain is found at 100-126 (NEDKICYYVHYKGWKNTWDEWVGEERV). The segment at 159 to 197 (PPEALSETASPAPTTKRKSMASKDSPAEGPRPVKRRGGL) is disordered. The MRG domain maps to 211-385 (KRKEIALVVP…ASPAYEALSK (175 aa)).

It belongs to the MRG family. As to quaternary structure, component of the NuA4 histone acetyltransferase complex.

The protein localises to the nucleus. Functionally, involved in deacetylation of histones, chromatin assembly and chromosome segregation. May act as a transcriptional oscillator, directing histone deacetylases to specific chromosomal domains. Component of the NuA4 histone acetyltransferase complex which is involved in transcriptional activation of selected genes principally by acetylation of nucleosomal histone H4 and H2A. The NuA4 complex is also involved in DNA repair. In Yarrowia lipolytica (strain CLIB 122 / E 150) (Yeast), this protein is Chromatin modification-related protein EAF3 (EAF3).